Consider the following 292-residue polypeptide: Glycinyltransferase (292 aa).

It belongs to the thymidine aminotransferase family.

It carries out the reaction 5-phosphomethyl-dUMP in DNA + glycine = 5-N(alpha)-glycyl-dTMP in DNA + phosphate. Its function is as follows. Transfers glycine to 5-phosphomethyl-2'-deoxyuridine (5-PmdU) to produce 5-Nalpha-glycinylthymidine (Nalpha-GlyT) on DNA as a step in the pathway leading to thymidine hypermodifications in the viral genome. As a final result of the pathway of hypermodification, 5-acetylaminomethyl-2'-deoxyuridine (5-AcNmdU) substitutes for a subset of thymidines in the viral DNA. These modifications probably prevent degradation of viral genome by the host restriction-modification antiviral defense system. The sequence is that of Glycinyltransferase from Pseudomonas phage PaMx11.